Here is a 491-residue protein sequence, read N- to C-terminus: Probable cytosol aminopeptidase (491 aa).

Positions 264 and 269 each coordinate Mn(2+). K276 is an active-site residue. Mn(2+) contacts are provided by D287, D346, and E348. R350 is a catalytic residue.

The protein belongs to the peptidase M17 family. It depends on Mn(2+) as a cofactor.

The protein localises to the cytoplasm. The enzyme catalyses Release of an N-terminal amino acid, Xaa-|-Yaa-, in which Xaa is preferably Leu, but may be other amino acids including Pro although not Arg or Lys, and Yaa may be Pro. Amino acid amides and methyl esters are also readily hydrolyzed, but rates on arylamides are exceedingly low.. It carries out the reaction Release of an N-terminal amino acid, preferentially leucine, but not glutamic or aspartic acids.. Presumably involved in the processing and regular turnover of intracellular proteins. Catalyzes the removal of unsubstituted N-terminal amino acids from various peptides. In Xylella fastidiosa (strain Temecula1 / ATCC 700964), this protein is Probable cytosol aminopeptidase.